The chain runs to 60 residues: DNA-directed RNA polymerase subunit Rpo6 (60 aa).

Belongs to the archaeal Rpo6/eukaryotic RPB6 RNA polymerase subunit family. As to quaternary structure, part of the RNA polymerase complex.

Its subcellular location is the cytoplasm. It catalyses the reaction RNA(n) + a ribonucleoside 5'-triphosphate = RNA(n+1) + diphosphate. Its function is as follows. DNA-dependent RNA polymerase (RNAP) catalyzes the transcription of DNA into RNA using the four ribonucleoside triphosphates as substrates. The protein is DNA-directed RNA polymerase subunit Rpo6 of Methanothrix thermoacetophila (strain DSM 6194 / JCM 14653 / NBRC 101360 / PT) (Methanosaeta thermophila).